Consider the following 432-residue polypeptide: Glutamate-1-semialdehyde 2,1-aminomutase 2 (432 aa).

Residue K268 is modified to N6-(pyridoxal phosphate)lysine.

Belongs to the class-III pyridoxal-phosphate-dependent aminotransferase family. HemL subfamily. Homodimer. The cofactor is pyridoxal 5'-phosphate.

Its subcellular location is the cytoplasm. The enzyme catalyses (S)-4-amino-5-oxopentanoate = 5-aminolevulinate. It participates in porphyrin-containing compound metabolism; protoporphyrin-IX biosynthesis; 5-aminolevulinate from L-glutamyl-tRNA(Glu): step 2/2. The protein is Glutamate-1-semialdehyde 2,1-aminomutase 2 of Listeria innocua serovar 6a (strain ATCC BAA-680 / CLIP 11262).